Consider the following 57-residue polypeptide: uncharacterized protein (57 aa).

Residues 34 to 54 (AALLDAAALVVIPGLLTVAAV) traverse the membrane as a helical segment.

The protein localises to the membrane. This is an uncharacterized protein from Dictyostelium discoideum (Social amoeba).